Reading from the N-terminus, the 346-residue chain is Isopentenyl-diphosphate delta-isomerase (346 aa).

Position 12-13 (12-13 (RK)) interacts with substrate. FMN-binding positions include 67–69 (ALT), serine 97, and asparagine 126. A substrate-binding site is contributed by 97–99 (SQR). Glutamine 156 serves as a coordination point for substrate. Glutamate 157 is a Mg(2+) binding site. FMN contacts are provided by residues lysine 188, threonine 218, 263 to 265 (GIR), and 284 to 285 (AG).

This sequence belongs to the IPP isomerase type 2 family. In terms of assembly, homooctamer. Dimer of tetramers. It depends on FMN as a cofactor. NADPH serves as cofactor. The cofactor is Mg(2+).

It localises to the cytoplasm. It carries out the reaction isopentenyl diphosphate = dimethylallyl diphosphate. Involved in the biosynthesis of isoprenoids. Catalyzes the 1,3-allylic rearrangement of the homoallylic substrate isopentenyl (IPP) to its allylic isomer, dimethylallyl diphosphate (DMAPP). The protein is Isopentenyl-diphosphate delta-isomerase of Moorella thermoacetica (strain ATCC 39073 / JCM 9320).